We begin with the raw amino-acid sequence, 632 residues long: Extracellular metalloproteinase 2 (632 aa).

Residues 1-19 (MHGLLLAGLAVALPLGVAG) form the signal peptide. The propeptide occupies 20 to 244 (HPARPQTALS…VHNVVDYVAS (225 aa)). N-linked (GlcNAc...) asparagine glycosylation is present at Asn270. Positions 294–310 (NNVAAQDNPSGGSQWEN) are enriched in polar residues. The tract at residues 294–313 (NNVAAQDNPSGGSQWENNYR) is disordered. A Zn(2+)-binding site is contributed by His429. Glu430 is a catalytic residue. Zn(2+) is bound at residue His433.

Belongs to the peptidase M36 family. It depends on Zn(2+) as a cofactor.

It is found in the secreted. Its function is as follows. Secreted metalloproteinase probably acting as a virulence factor. The chain is Extracellular metalloproteinase 2 (MEP2) from Arthroderma otae (Microsporum canis).